A 95-amino-acid chain; its full sequence is Ragulator complex protein LAMTOR4 homolog (95 aa).

This sequence belongs to the LAMTOR4 family. As to quaternary structure, part of the Ragulator complex.

Its subcellular location is the lysosome. Its function is as follows. Regulator of the TOR pathway, a signaling cascade that promotes cell growth in response to growth factors, energy levels, and amino acids. As part of the Ragulator complex, may activate the TOR signaling cascade in response to amino acids. In Nematostella vectensis (Starlet sea anemone), this protein is Ragulator complex protein LAMTOR4 homolog.